The primary structure comprises 37 residues: GENEPPKKKAPDGCFGHKIDRIGSHSGLGCNKFKPGH.

The cysteines at positions 14 and 30 are disulfide-linked.

As to expression, expressed by the venom gland.

Its subcellular location is the secreted. Functionally, increases urine flow and decreases blood pressure when administered to rats by intravenous injection. Inhibits thrombin-induced platelet aggregation. Stimulates cGMP production via the natriuretic peptide receptor-A (NPR1). The chain is Natriuretic peptide PNP from Pseudocerastes persicus (Persian horned viper).